Consider the following 122-residue polypeptide: MIQSFTRLAVADNSGAKELMCIKVLGGSKRRYASLGDIIVCSVKKALPNGKIKKGQVVKAVVVRTKKEVQRANGSLIRFDENAAVILDNKKEPVGTRIFGPVGREVRYANFMKIVSLAPEVL.

This sequence belongs to the universal ribosomal protein uL14 family. As to quaternary structure, part of the 50S ribosomal subunit. Forms a cluster with proteins L3 and L19. In the 70S ribosome, L14 and L19 interact and together make contacts with the 16S rRNA in bridges B5 and B8.

Its function is as follows. Binds to 23S rRNA. Forms part of two intersubunit bridges in the 70S ribosome. This chain is Large ribosomal subunit protein uL14, found in Campylobacter fetus subsp. fetus (strain 82-40).